Reading from the N-terminus, the 145-residue chain is 3-hydroxyacyl-[acyl-carrier-protein] dehydratase FabZ (145 aa).

His51 is a catalytic residue.

The protein belongs to the thioester dehydratase family. FabZ subfamily.

Its subcellular location is the cytoplasm. It carries out the reaction a (3R)-hydroxyacyl-[ACP] = a (2E)-enoyl-[ACP] + H2O. Functionally, involved in unsaturated fatty acids biosynthesis. Catalyzes the dehydration of short chain beta-hydroxyacyl-ACPs and long chain saturated and unsaturated beta-hydroxyacyl-ACPs. In Macrococcus caseolyticus (strain JCSC5402) (Macrococcoides caseolyticum), this protein is 3-hydroxyacyl-[acyl-carrier-protein] dehydratase FabZ.